The following is an 87-amino-acid chain: NADH-ubiquinone oxidoreductase chain 4L (87 aa).

A run of 2 helical transmembrane segments spans residues 22-42 (FLSF…FIIG) and 49-69 (LFLI…SLLV).

The protein belongs to the complex I subunit 4L family.

The protein resides in the mitochondrion membrane. The enzyme catalyses a ubiquinone + NADH + 5 H(+)(in) = a ubiquinol + NAD(+) + 4 H(+)(out). Its function is as follows. Core subunit of the mitochondrial membrane respiratory chain NADH dehydrogenase (Complex I) that is believed to belong to the minimal assembly required for catalysis. Complex I functions in the transfer of electrons from NADH to the respiratory chain. The immediate electron acceptor for the enzyme is believed to be ubiquinone. In Apis mellifera ligustica (Common honeybee), this protein is NADH-ubiquinone oxidoreductase chain 4L (ND4L).